The chain runs to 249 residues: MPFEVVFDGAKEFADLIATASNLIDEAAFKFTEEGISMRAMDPSRVVLIDLNLPESIFSKYEVEEPETIGINMDQFKKILKRGKAKDTLILRKGDENFLEITFEGTAKRTFRLPLIDVEELELELPELPFTAKVVLLGEVLKEGIKDASLVSDAIKFIAKENEFTMKAEGETNEVEIRLTLEDEGLLDLEVEEETKSAYGIRYLSDMVKGIGKADEVILRFGNEMPLQMEYMIRDEGRLTFLLAPRVEE.

Belongs to the PCNA family. Homotrimer. The subunits circularize to form a toroid; DNA passes through its center. Replication factor C (RFC) is required to load the toroid on the DNA. Interacts with TIP.

Its activity is regulated as follows. Inhibited by interaction with the PCNA inhibitor TIP. Sliding clamp subunit that acts as a moving platform for DNA processing. Responsible for tethering the catalytic subunit of DNA polymerase and other proteins to DNA during high-speed replication. The chain is DNA polymerase sliding clamp 1 from Thermococcus kodakarensis (strain ATCC BAA-918 / JCM 12380 / KOD1) (Pyrococcus kodakaraensis (strain KOD1)).